The sequence spans 367 residues: Protein TlpB (367 aa).

5 helical membrane passes run 15–35 (ILIS…SPYF), 53–73 (IIAP…GILI), 83–103 (IIPI…YVTF), 124–144 (IQAI…FFLL), and 153–173 (FYVV…LAPI).

Its subcellular location is the membrane. The protein is Protein TlpB (tlpB) of Flavobacterium psychrophilum.